A 341-amino-acid polypeptide reads, in one-letter code: tRNA N6-adenosine threonylcarbamoyltransferase (341 aa).

Positions 112 and 116 each coordinate Fe cation. Substrate contacts are provided by residues 138–142 (TVSGG), aspartate 171, glycine 184, aspartate 188, and asparagine 279. Aspartate 307 contributes to the Fe cation binding site.

Belongs to the KAE1 / TsaD family. The cofactor is Fe(2+).

The protein resides in the cytoplasm. It catalyses the reaction L-threonylcarbamoyladenylate + adenosine(37) in tRNA = N(6)-L-threonylcarbamoyladenosine(37) in tRNA + AMP + H(+). Its function is as follows. Required for the formation of a threonylcarbamoyl group on adenosine at position 37 (t(6)A37) in tRNAs that read codons beginning with adenine. Is involved in the transfer of the threonylcarbamoyl moiety of threonylcarbamoyl-AMP (TC-AMP) to the N6 group of A37, together with TsaE and TsaB. TsaD likely plays a direct catalytic role in this reaction. The polypeptide is tRNA N6-adenosine threonylcarbamoyltransferase (Riemerella anatipestifer (Moraxella anatipestifer)).